Here is a 627-residue protein sequence, read N- to C-terminus: Sphingomyelin phosphodiesterase (627 aa).

A signal peptide spans 1 to 44; it reads MPHHRASSGQDHLRAGWEQRLERSLPAPRVGLLWMGLGLALVLA. Positions 83-167 constitute a Saposin B-type domain; it reads QNLTCPACKV…LLGSSCGHWD (85 aa). Residue Asn-84 is glycosylated (N-linked (GlcNAc...) asparagine). 3 cysteine pairs are disulfide-bonded: Cys-87/Cys-163, Cys-90/Cys-155, and Cys-118/Cys-129. N-linked (GlcNAc...) asparagine glycosylation occurs at Asn-173. Residues Asp-204 and His-206 each coordinate Zn(2+). 2 disulfides stabilise this stretch: Cys-219/Cys-224 and Cys-225/Cys-248. Zn(2+)-binding residues include Asp-276 and Asn-316. N-linked (GlcNAc...) asparagine glycans are attached at residues Asn-333 and Asn-393. Cys-383 and Cys-429 are disulfide-bonded. Residues His-423, His-455, and His-457 each coordinate Zn(2+). A Phosphoserine modification is found at Ser-506. Asn-518 carries N-linked (GlcNAc...) asparagine glycosylation. 2 disulfide bridges follow: Cys-582/Cys-586 and Cys-592/Cys-605. The N-linked (GlcNAc...) asparagine glycan is linked to Asn-611.

It belongs to the acid sphingomyelinase family. As to quaternary structure, monomer. Interacts with SORT1; the interaction is required for SMPD1 targeting to lysosomes. Zn(2+) serves as cofactor. Proteolytically processed. Mature lysosomal form arises from C-terminal proteolytic processing of pro-sphingomyelin phosphodiesterase. In terms of processing, both lysosomal and secreted forms are glycosylated but they show a differential pattern of glycosylation. Post-translationally, phosphorylated at Ser-506 by PRKCD upon stress stimuli. Phosphorylation is required for secretion. This form is generated following cleavage by CASP7 in the extracellular milieu. It shows increased activity.

Its subcellular location is the lysosome. It localises to the lipid droplet. The protein localises to the secreted. The protein resides in the extracellular space. The enzyme catalyses a sphingomyelin + H2O = phosphocholine + an N-acylsphing-4-enine + H(+). It carries out the reaction N-(octadecanoyl)-sphing-4-enine-1-phosphocholine + H2O = N-octadecanoylsphing-4-enine + phosphocholine + H(+). It catalyses the reaction a 1,2-diacyl-sn-glycero-3-phosphocholine + H2O = phosphocholine + a 1,2-diacyl-sn-glycerol + H(+). The catalysed reaction is 1,2-dihexadecanoyl-sn-glycero-3-phosphocholine + H2O = 1,2-dihexadecanoyl-sn-glycerol + phosphocholine + H(+). Its activity is regulated as follows. Hydrolysis of liposomal sphingomyelin is stimulated by incorporation of diacylglycerol (DAG), ceramide and free fatty acids into the liposomal membranes. Phosphatidylcholine hydrolysis is inhibited by incorporation of cholesterol, ceramide, DAG, monoacylglycerol and fatty acids. In terms of biological role, converts sphingomyelin to ceramide. Exists as two enzymatic forms that arise from alternative trafficking of a single protein precursor, one that is targeted to the endolysosomal compartment, whereas the other is released extracellularly. However, in response to various forms of stress, lysosomal exocytosis may represent a major source of the secretory form. In the lysosomes, converts sphingomyelin to ceramide. Plays an important role in the export of cholesterol from the intraendolysosomal membranes. Also has phospholipase C activities toward 1,2-diacylglycerolphosphocholine and 1,2-diacylglycerolphosphoglycerol. Modulates stress-induced apoptosis through the production of ceramide. Functionally, when secreted, modulates cell signaling with its ability to reorganize the plasma membrane by converting sphingomyelin to ceramide. Secreted form is increased in response to stress and inflammatory mediators such as IL1B, IFNG or TNF as well as upon infection with bacteria and viruses. Produces the release of ceramide in the outer leaflet of the plasma membrane playing a central role in host defense. Ceramide reorganizes these rafts into larger signaling platforms that are required to internalize P.aeruginosa, induce apoptosis and regulate the cytokine response in infected cells. In wounded cells, the lysosomal form is released extracellularly in the presence of Ca(2+) and promotes endocytosis and plasma membrane repair. Its function is as follows. This form is generated following cleavage by CASP7 in the extracellular milieu in response to bacterial infection. It shows increased ability to convert sphingomyelin to ceramide and promotes plasma membrane repair. Plasma membrane repair by ceramide counteracts the action of gasdermin-D (GSDMD) perforin (PRF1) pores that are formed in response to bacterial infection. In terms of biological role, (Microbial infection) Secretion is activated by bacteria such as P.aeruginosa, this activation results in the release of ceramide in the outer leaflet of the plasma membrane which facilitates the infection. The polypeptide is Sphingomyelin phosphodiesterase (Mus musculus (Mouse)).